Consider the following 156-residue polypeptide: S-ribosylhomocysteine lyase (156 aa).

Residues H56, H60, and C123 each coordinate Fe cation.

This sequence belongs to the LuxS family. In terms of assembly, homodimer. The cofactor is Fe cation.

It catalyses the reaction S-(5-deoxy-D-ribos-5-yl)-L-homocysteine = (S)-4,5-dihydroxypentane-2,3-dione + L-homocysteine. In terms of biological role, involved in the synthesis of autoinducer 2 (AI-2) which is secreted by bacteria and is used to communicate both the cell density and the metabolic potential of the environment. The regulation of gene expression in response to changes in cell density is called quorum sensing. Catalyzes the transformation of S-ribosylhomocysteine (RHC) to homocysteine (HC) and 4,5-dihydroxy-2,3-pentadione (DPD). The chain is S-ribosylhomocysteine lyase from Staphylococcus haemolyticus (strain JCSC1435).